Reading from the N-terminus, the 829-residue chain is Colorectal mutant cancer protein (829 aa).

Disordered stretches follow at residues 114 to 139 (RSEL…TSVS), 282 to 320 (TRLQ…SSND), and 672 to 700 (EEQK…CADA). Over residues 123 to 132 (EVNEDSRSMD) the composition is skewed to basic and acidic residues. Residues 285–312 (QSVQATGPSSPGRLTSTNRPINPSTGEL) show a composition bias toward polar residues. Positions 689–698 (SKDKPGKECA) are enriched in basic and acidic residues. A Nuclear localization signal motif is present at residues 766 to 782 (KRANSNLVAAYEKAKKK). The short motif at 826 to 829 (ETSL) is the PDZ-binding element. S828 carries the phosphoserine modification.

Belongs to the MCC family. As to quaternary structure, interacts with SCRIB (via phosphorylated PDZ-binding motif), EZR, SNX27, NHERF1 and NHERF2. Interacts with CTNNB1; the interaction is enhanced upon Wnt stimulation. Interacts with MYH10. Interacts with CCAR2. Expressed in a variety of tissues.

It is found in the cell membrane. The protein localises to the cell projection. Its subcellular location is the lamellipodium. It localises to the nucleus. The protein resides in the cytoplasm. Candidate for the putative colorectal tumor suppressor gene located at 5q21. Suppresses cell proliferation and the Wnt/b-catenin pathway in colorectal cancer cells. Inhibits DNA binding of b-catenin/TCF/LEF transcription factors. Involved in cell migration independently of RAC1, CDC42 and p21-activated kinase (PAK) activation. Represses the beta-catenin pathway (canonical Wnt signaling pathway) in a CCAR2-dependent manner by sequestering CCAR2 to the cytoplasm, thereby impairing its ability to inhibit SIRT1 which is involved in the deacetylation and negative regulation of beta-catenin (CTNB1) transcriptional activity. The polypeptide is Colorectal mutant cancer protein (MCC) (Homo sapiens (Human)).